A 208-amino-acid chain; its full sequence is Sodium/potassium-transporting ATPase subunit beta-1-interacting protein 2 (208 aa).

4 helical membrane-spanning segments follow: residues 1-23, 35-55, 64-84, and 148-168; these read MGYC…CVLE, APIL…FGTI, GYAV…CFYL, and VAHS…ACYV.

It belongs to the NKAIN family. Interacts with ATP1B1. As to expression, detected in the brain only and specifically in neurons; expressed in multiple regions such as cerebral cortex, thalamus, cerebellum, olfactory bulb and brainstem, but not in the hippocampus.

The protein resides in the cell membrane. The sequence is that of Sodium/potassium-transporting ATPase subunit beta-1-interacting protein 2 (Nkain2) from Mus musculus (Mouse).